The primary structure comprises 93 residues: Serine rich endogenous peptide 6 (93 aa).

Residues 1 to 27 (MGTKCYSKLRYVVVLVLLLFVFPCSLS) form the signal peptide. Short sequence motifs (SCOOP motif) lie at residues 48-62 (GIIA…APNI) and 73-87 (ISEA…GGGR). The segment at 52–93 (GSSPSGQAPNINNNYHGRRLMISEARPSKSKKGGGREPESPG) is disordered. Positions 53–66 (SSPSGQAPNINNNY) are enriched in polar residues. Short sequence motifs (sxS motif essential for MIK2 binding) lie at residues 54–56 (SPS) and 79–81 (SKS).

The protein belongs to the serine rich endogenous peptide (SCOOP) phytocytokine family. Interacts with MIK2 (via extracellular leucine-rich repeat domain); this interaction triggers the formation of complex between MIK2 and the BAK1/SERK3 and SERK4 coreceptors, and subsequent BAK1 activation by phosphorylation. Mostly expressed in seedlings shoots, and, to a lower extent, in roots.

The protein localises to the cell membrane. The protein resides in the secreted. It is found in the extracellular space. It localises to the apoplast. Functionally, brassicaceae-specific phytocytokine (plant endogenous peptide released into the apoplast) perceived by MIK2 in a BAK1/SERK3 and SERK4 coreceptors-dependent manner, that modulates various physiological and antimicrobial processes including growth prevention and reactive oxygen species (ROS) response regulation. Inhibits root growth. In Arabidopsis thaliana (Mouse-ear cress), this protein is Serine rich endogenous peptide 6.